Reading from the N-terminus, the 452-residue chain is COBRA-like protein 1 (452 aa).

The signal sequence occupies residues 1-33 (MGFFLCSSSSIFFKFGISIIFLVSFSGLTPSEA). 9 N-linked (GlcNAc...) asparagine glycosylation sites follow: asparagine 42, asparagine 167, asparagine 175, asparagine 214, asparagine 239, asparagine 254, asparagine 323, asparagine 338, and asparagine 357. Residue serine 432 is the site of GPI-anchor amidated serine attachment. Residues 433 to 452 (VGSLFAAMALLLIVFLHGNL) constitute a propeptide, removed in mature form.

The protein belongs to the COBRA family. As to expression, expressed in roots, stems, leaves, flowers and siliques.

It localises to the cell membrane. The chain is COBRA-like protein 1 (COBL1) from Arabidopsis thaliana (Mouse-ear cress).